The following is a 189-amino-acid chain: Nuclear distribution protein nudE homolog 1 (189 aa).

The stretch at 4–121 (NLDLETAIQI…LRVSKEEATS (118 aa)) forms a coiled coil. Basic and acidic residues predominate over residues 114–126 (VSKEEATSGETRR). Residues 114 to 139 (VSKEEATSGETRRNTRSLPSQNKKMK) form a disordered region.

This sequence belongs to the nudE family. In terms of assembly, self-associates. Interacts with PAC1.

The protein resides in the nucleus. It is found in the cytoplasm. It localises to the cytoskeleton. Required for nuclear migration to the bud neck during cell division. Targets cytoplasmic dynein to microtubule plus ends thereby promoting dynein-mediated microtubule sliding along the bud cortex and consequently the movement of the mitotic spindle to the bud neck. This Saccharomyces cerevisiae (strain ATCC 204508 / S288c) (Baker's yeast) protein is Nuclear distribution protein nudE homolog 1 (NDL1).